A 40-amino-acid polypeptide reads, in one-letter code: Plasma membrane ATPase proteolipid 1 (40 aa).

Positions 1-2 (MT) are excised as a propeptide. Residues 3–26 (LPGGVILVFILVGLACIAIIATII) traverse the membrane as a helical segment. The Cytoplasmic portion of the chain corresponds to 27–40 (YRKWQARQRGLQRF).

In terms of assembly, monomer and homodimer. Associated with the 100 kDa subunit of the plasma membrane H(+)-ATPase.

The protein localises to the cell membrane. This Saccharomyces cerevisiae (strain ATCC 204508 / S288c) (Baker's yeast) protein is Plasma membrane ATPase proteolipid 1 (PMP1).